Reading from the N-terminus, the 152-residue chain is 3-hydroxyacyl-[acyl-carrier-protein] dehydratase FabZ (152 aa).

Residue histidine 58 is part of the active site.

Belongs to the thioester dehydratase family. FabZ subfamily.

It is found in the cytoplasm. It carries out the reaction a (3R)-hydroxyacyl-[ACP] = a (2E)-enoyl-[ACP] + H2O. Involved in unsaturated fatty acids biosynthesis. Catalyzes the dehydration of short chain beta-hydroxyacyl-ACPs and long chain saturated and unsaturated beta-hydroxyacyl-ACPs. The polypeptide is 3-hydroxyacyl-[acyl-carrier-protein] dehydratase FabZ (Synechococcus sp. (strain RCC307)).